The chain runs to 207 residues: NADH-ubiquinone oxidoreductase chain 6 (207 aa).

A run of 5 helical transmembrane segments spans residues 15–35 (ILLDIISILSIISSIAIILVS), 40–60 (SILYLIILFINIAIYLYLIGI), 66–86 (LYILVYIGAIAVLFLFILSLF), 116–136 (LFILIIIIFYYNMINYFNNIY), and 184–204 (ILLIFISFLLLFSILSAIVLT).

It belongs to the complex I subunit 6 family.

The protein localises to the mitochondrion membrane. The enzyme catalyses a ubiquinone + NADH + 5 H(+)(in) = a ubiquinol + NAD(+) + 4 H(+)(out). Core subunit of the mitochondrial membrane respiratory chain NADH dehydrogenase (Complex I) that is believed to belong to the minimal assembly required for catalysis. Complex I functions in the transfer of electrons from NADH to the respiratory chain. The immediate electron acceptor for the enzyme is believed to be ubiquinone. The polypeptide is NADH-ubiquinone oxidoreductase chain 6 (ND6) (Wickerhamomyces canadensis (Yeast)).